The sequence spans 235 residues: MGSNIDKTLNALSQGFVSSCQPVDDGPMDKPEIVAAMAMASVEGGAIGLRIEGIDNLKAVRPHVSVPIIGIIKRDLDDSEVRITPYIEDVIALKEAGADIIAIDATHRPRPVPVEELVKKIQSLGCLVMADSSTYEEGMFCHGLGVEIIGTTLSGYTTPVTPKEPDFPFIQQLANQGCFVMAEGRFNSPQLAREAIEAGASCVTVGSAITRIEHICGWFKSEVELGKKNMVKDIA.

It belongs to the NanE family.

The catalysed reaction is an N-acyl-D-glucosamine 6-phosphate = an N-acyl-D-mannosamine 6-phosphate. The protein operates within amino-sugar metabolism; N-acetylneuraminate degradation; D-fructose 6-phosphate from N-acetylneuraminate: step 3/5. Converts N-acetylmannosamine-6-phosphate (ManNAc-6-P) to N-acetylglucosamine-6-phosphate (GlcNAc-6-P). The sequence is that of Putative N-acetylmannosamine-6-phosphate 2-epimerase from Aliivibrio fischeri (strain ATCC 700601 / ES114) (Vibrio fischeri).